Consider the following 85-residue polypeptide: Conotoxin Cap15b (85 aa).

Positions 1–23 (MEKLTFLILVATVLLTIHVLVQS) are cleaved as a signal peptide. The propeptide occupies 24–49 (DGDKHLKRRPKQYATKRLSALMRGHR). A Pyrrolidone carboxylic acid modification is found at Gln-50.

The protein belongs to the conotoxin O2 superfamily. Contains 4 disulfide bonds. As to expression, expressed by the venom duct.

It localises to the secreted. The polypeptide is Conotoxin Cap15b (Conus capitaneus (Captain cone)).